The chain runs to 983 residues: Anion exchange protein 4 (983 aa).

Residues 1–48 (MEMKLPGQEGFEASSAPRNIPSGELDSNPDPGTGPSPDGPSDTESKEL) form a disordered region. Asparagine 183 carries N-linked (GlcNAc...) asparagine glycosylation. 2 disordered regions span residues 186-205 (TGTR…DNEE) and 332-357 (RIPP…RGPA). The next 4 membrane-spanning stretches (helical) occupy residues 415-435 (AVLY…GLLG), 443-463 (GVLE…LMAG), 500-520 (VGIW…SVLV), and 530-550 (GFCA…MLNL). The segment at 415–983 (AVLYIYLATV…KAPEINISVN (569 aa)) is membrane (anion exchange). N-linked (GlcNAc...) asparagine glycosylation is found at asparagine 576 and asparagine 600. 7 helical membrane-spanning segments follow: residues 624–644 (VPDI…FAMA), 665–685 (FSSV…GLAT), 712–732 (PWWW…LIFM), 758–778 (LFCV…WYVS), 815–835 (GLVV…LKFI), 837–857 (MPVL…SIQF), and 899–919 (LWII…LGLV). Positions 946-957 (RSIPEKGLEPEH) are enriched in basic and acidic residues. A disordered region spans residues 946 to 983 (RSIPEKGLEPEHSFSGSDSEDSELMYQPKAPEINISVN). The N-linked (GlcNAc...) asparagine glycan is linked to asparagine 979.

Belongs to the anion exchanger (TC 2.A.31) family. In terms of tissue distribution, kidney specific.

The protein resides in the basolateral cell membrane. The enzyme catalyses 2 hydrogencarbonate(out) + chloride(in) + Na(+)(out) = 2 hydrogencarbonate(in) + chloride(out) + Na(+)(in). It catalyses the reaction K(+)(in) + 2 hydrogencarbonate(in) + chloride(out) = K(+)(out) + 2 hydrogencarbonate(out) + chloride(in). It carries out the reaction Li(+)(in) + 2 hydrogencarbonate(in) + chloride(out) = Li(+)(out) + 2 hydrogencarbonate(out) + chloride(in). The catalysed reaction is Rb(+)(in) + 2 hydrogencarbonate(in) + chloride(out) = Rb(+)(out) + 2 hydrogencarbonate(out) + chloride(in). The enzyme catalyses Cs(+)(in) + 2 hydrogencarbonate(in) + chloride(out) = Cs(+)(out) + 2 hydrogencarbonate(out) + chloride(in). Functionally, electroneutral Cl(-)/HCO3(-) antiporter that favors chloride ion entry and efflux of hydrogencarbonate and sodium ion across the basolateral membrane and may participate in salivary secretion. Also mediates Cl(-)/HCO3(-) exchange activity in the presence of K(+) as well as Cs(+), Li(+), and Rb(+). Does not contribute to Cl(-)/HCO3(-) exchanger in the apical membrane of the upper villous epithelium. The chain is Anion exchange protein 4 from Homo sapiens (Human).